Consider the following 98-residue polypeptide: NADH-ubiquinone oxidoreductase chain 4L (98 aa).

A run of 3 helical transmembrane segments spans residues 1 to 21 (MIPT…GMLT), 29 to 49 (SLLC…LIAL), and 61 to 81 (IILL…LVSI).

This sequence belongs to the complex I subunit 4L family. In terms of assembly, core subunit of respiratory chain NADH dehydrogenase (Complex I) which is composed of 45 different subunits.

Its subcellular location is the mitochondrion inner membrane. The catalysed reaction is a ubiquinone + NADH + 5 H(+)(in) = a ubiquinol + NAD(+) + 4 H(+)(out). Core subunit of the mitochondrial membrane respiratory chain NADH dehydrogenase (Complex I) which catalyzes electron transfer from NADH through the respiratory chain, using ubiquinone as an electron acceptor. Part of the enzyme membrane arm which is embedded in the lipid bilayer and involved in proton translocation. This chain is NADH-ubiquinone oxidoreductase chain 4L (MT-ND4L), found in Macaca ochreata subsp. brunnescens (Muna-buton macaque).